We begin with the raw amino-acid sequence, 168 residues long: MPLPHTHSLVVSTLSLEHSDKPQRRSRAKVKKKKKTNMSWQTYVDDHLMCDVAGNRLTAAAILGQDGSVWAQSNNFPQVKPEEIQGIKDDFTTPGTLAPTGLFLGGNKYMVIQGEPNAVIRGKKGAGGVTIKKTTLALVFGIYDEPMTPGQCNMVVENLGEYLIESGL.

Residues 14–36 (LSLEHSDKPQRRSRAKVKKKKKT) are disordered. Over residues 24-36 (RRSRAKVKKKKKT) the composition is skewed to basic residues.

The protein belongs to the profilin family. In terms of assembly, occurs in many kinds of cells as a complex with monomeric actin in a 1:1 ratio. Binding to the poly-proline motif of formins induces formation of oligomers through the N-terminal hydrophobic residues of PRF3. Expressed in roots, rosette leaves, cauline leaves, stems and flowers.

It localises to the cytoplasm. The protein localises to the cytoskeleton. In terms of biological role, binds to actin monomers and regulates the organization of the actin cytoskeleton. Can increase the critical concentration (Cc) of actin assembly in vitro. Acts as a downstream effector of the hydrogen sulfide signaling to regulate the assembly and depolymerization of F-actin. At high concentrations, profilin prevents the polymerization of actin, whereas it enhances it at low concentrations. Binding to the poly-proline motif of formin induces oligomerization of PRF3. PRF3 oligomers inhibit formin-mediated actin assembly to modulate plant immunity triggered by pathogen-associated molecular patterns (PAMPs). This is Profilin-3 from Arabidopsis thaliana (Mouse-ear cress).